The following is a 195-amino-acid chain: Protein GrpE (195 aa).

The disordered stretch occupies residues 1 to 60; it reads MAKDEEKNSQASAAPNEGEVKAKQEQTSAKEPAAKAGETEKVADLQKQVEELTKQLDDQK. Residues 37–60 show a composition bias toward basic and acidic residues; it reads GETEKVADLQKQVEELTKQLDDQK.

This sequence belongs to the GrpE family. As to quaternary structure, homodimer.

The protein localises to the cytoplasm. In terms of biological role, participates actively in the response to hyperosmotic and heat shock by preventing the aggregation of stress-denatured proteins, in association with DnaK and GrpE. It is the nucleotide exchange factor for DnaK and may function as a thermosensor. Unfolded proteins bind initially to DnaJ; upon interaction with the DnaJ-bound protein, DnaK hydrolyzes its bound ATP, resulting in the formation of a stable complex. GrpE releases ADP from DnaK; ATP binding to DnaK triggers the release of the substrate protein, thus completing the reaction cycle. Several rounds of ATP-dependent interactions between DnaJ, DnaK and GrpE are required for fully efficient folding. This chain is Protein GrpE, found in Limosilactobacillus fermentum (strain NBRC 3956 / LMG 18251) (Lactobacillus fermentum).